The primary structure comprises 593 residues: Serine/threonine-protein kinase PAK 4 (593 aa).

Positions 11 to 24 (ISAPSNFEHRVHTG) constitute a CRIB domain. The tract at residues 25 to 322 (FDQHEQKFTG…VVDPGDPRSY (298 aa)) is linker. S41 is subject to Phosphoserine. K78 carries the post-translational modification N6-methyllysine. A disordered region spans residues 95–303 (TRSNSLRRES…PQREPQRVSH (209 aa)). S104 bears the Phosphoserine mark. Basic and acidic residues predominate over residues 118-133 (LEERAAPARMAPDKAG). S148 is subject to Phosphoserine. Residues 149–164 (GDRRRVGPEKRPKSSR) show a composition bias toward basic and acidic residues. A Phosphoserine modification is found at S181. Residues 184–197 (DVSTPQPGSLTSGT) are compositionally biased toward polar residues. Phosphothreonine is present on T187. S195 is subject to Phosphoserine. Residue T207 is modified to Phosphothreonine. Low complexity predominate over residues 238–258 (AAPQSSSSSRPPTRARGAPSP). A phosphoserine mark is found at S257 and S266. Low complexity predominate over residues 267–280 (EPQLAPPARALAAP). The segment covering 281–292 (AVPPAPGPPGPR) has biased composition (pro residues). S293 bears the Phosphoserine mark. Basic and acidic residues predominate over residues 294 to 303 (PQREPQRVSH). A Protein kinase domain is found at 323-574 (LDNFIKIGEG…AAELLKHPFL (252 aa)). Residues 329–337 (IGEGSTGIV) and K352 each bind ATP. D442 functions as the Proton acceptor in the catalytic mechanism. Position 476 is a phosphoserine; by autocatalysis (S476).

This sequence belongs to the protein kinase superfamily. STE Ser/Thr protein kinase family. STE20 subfamily. As to quaternary structure, interacts tightly with GTP-bound but not GDP-bound CDC42/p21 and weakly with RAC1. Interacts with FGFR2 and GRB2. Interacts with INKA1. Interacts with SH3RF2. Interacts with RHOU and PAXI; the PAK4-RHOU complex protects RHOU from ubiquitination and acts as a scaffold to suppport paxillin/PAXI phosphorylation. Post-translationally, autophosphorylated on serine residues when activated by CDC42/p21. Phosphorylated on tyrosine residues upon stimulation of FGFR2. Methylated by SETD6. Polyubiquitinated, leading to its proteasomal degradation.

It is found in the cytoplasm. It carries out the reaction L-seryl-[protein] + ATP = O-phospho-L-seryl-[protein] + ADP + H(+). The catalysed reaction is L-threonyl-[protein] + ATP = O-phospho-L-threonyl-[protein] + ADP + H(+). With respect to regulation, inhibited by INKA1; which inhibits the serine/threonine-protein kinase activity by binding PAK4 in a substrate-like manner. In terms of biological role, serine/threonine protein kinase that plays a role in a variety of different signaling pathways including cytoskeleton regulation, cell migration, growth, proliferation or cell survival. Activation by various effectors including growth factor receptors or active CDC42 and RAC1 results in a conformational change and a subsequent autophosphorylation on several serine and/or threonine residues. Phosphorylates and inactivates the protein phosphatase SSH1, leading to increased inhibitory phosphorylation of the actin binding/depolymerizing factor cofilin. Decreased cofilin activity may lead to stabilization of actin filaments. Phosphorylates LIMK1, a kinase that also inhibits the activity of cofilin. Phosphorylates integrin beta5/ITGB5 and thus regulates cell motility. Phosphorylates ARHGEF2 and activates the downstream target RHOA that plays a role in the regulation of assembly of focal adhesions and actin stress fibers. Stimulates cell survival by phosphorylating the BCL2 antagonist of cell death BAD. Alternatively, inhibits apoptosis by preventing caspase-8 binding to death domain receptors in a kinase independent manner. Plays a role in cell-cycle progression by controlling levels of the cell-cycle regulatory protein CDKN1A and by phosphorylating RAN. Promotes kinase-independent stabilization of RHOU, thereby contributing to focal adhesion disassembly during cell migration. This chain is Serine/threonine-protein kinase PAK 4, found in Mus musculus (Mouse).